A 943-amino-acid chain; its full sequence is Neutral alpha-glucosidase AB (943 aa).

A signal peptide spans 1-23 (MRKLVILIILSIVCSLFIGSIES). Residues 186–231 (FEPISDKPQPLPPKEKKSEEENKEANQEEDNNNNNNDNNEEQQVST) form a disordered region. Positions 198–211 (PKEKKSEEENKEAN) are enriched in basic and acidic residues. The active-site Nucleophile is Asp540. Residue Glu543 is part of the active site. Catalysis depends on Asp617, which acts as the Proton donor. Asn878, Asn887, and Asn907 each carry an N-linked (GlcNAc...) asparagine glycan.

Belongs to the glycosyl hydrolase 31 family.

It localises to the endoplasmic reticulum. It is found in the golgi apparatus. It catalyses the reaction N(4)-(alpha-D-Glc-(1-&gt;3)-alpha-D-Man-(1-&gt;2)-alpha-D-Man-(1-&gt;2)-alpha-D-Man-(1-&gt;3)-[alpha-D-Man-(1-&gt;2)-alpha-D-Man-(1-&gt;3)-[alpha-D-Man-(1-&gt;2)-alpha-D-Man-(1-&gt;6)]-alpha-D-Man-(1-&gt;6)]-beta-D-Man-(1-&gt;4)-beta-D-GlcNAc-(1-&gt;4)-beta-D-GlcNAc)-L-asparaginyl-[protein] + H2O = N(4)-(alpha-D-Man-(1-&gt;2)-alpha-D-Man-(1-&gt;2)-alpha-D-Man-(1-&gt;3)-[alpha-D-Man-(1-&gt;2)-alpha-D-Man-(1-&gt;3)-[alpha-D-Man-(1-&gt;2)-alpha-D-Man-(1-&gt;6)]-alpha-D-Man-(1-&gt;6)]-beta-D-Man-(1-&gt;4)-beta-D-GlcNAc-(1-&gt;4)-beta-D-GlcNAc)-L-asparaginyl-[protein] (N-glucan mannose isomer 9A1,2,3B1,2,3) + beta-D-glucose. It carries out the reaction N(4)-(alpha-D-Glc-(1-&gt;3)-alpha-D-Glc-(1-&gt;3)-alpha-D-Man-(1-&gt;2)-alpha-D-Man-(1-&gt;2)-alpha-D-Man-(1-&gt;3)-[alpha-D-Man-(1-&gt;2)-alpha-D-Man-(1-&gt;3)-[alpha-D-Man-(1-&gt;2)-alpha-D-Man-(1-&gt;6)]-alpha-D-Man-(1-&gt;6)]-beta-D-Man-(1-&gt;4)-beta-D-GlcNAc-(1-&gt;4)-beta-D-GlcNAc)-L-asparaginyl-[protein] + H2O = N(4)-(alpha-D-Glc-(1-&gt;3)-alpha-D-Man-(1-&gt;2)-alpha-D-Man-(1-&gt;2)-alpha-D-Man-(1-&gt;3)-[alpha-D-Man-(1-&gt;2)-alpha-D-Man-(1-&gt;3)-[alpha-D-Man-(1-&gt;2)-alpha-D-Man-(1-&gt;6)]-alpha-D-Man-(1-&gt;6)]-beta-D-Man-(1-&gt;4)-beta-D-GlcNAc-(1-&gt;4)-beta-D-GlcNAc)-L-asparaginyl-[protein] + beta-D-glucose. It participates in glycan metabolism; N-glycan metabolism. Cleaves sequentially the 2 innermost alpha-1,3-linked glucose residues from N-linked oligosaccharides on newly synthesized glycoproteins. This Dictyostelium discoideum (Social amoeba) protein is Neutral alpha-glucosidase AB (modA).